We begin with the raw amino-acid sequence, 273 residues long: Serine acetyltransferase (273 aa).

This sequence belongs to the transferase hexapeptide repeat family. In terms of assembly, part of the cysteine synthase complex formed at a ratio of 1 copy of this protein and 2 copies of O-acetylserine sulfhydrylase (cysK). The complex reversibly dissociates in the presence of O-acetyl-L-serine in the absence of hydrogen sulfide.

It localises to the cytoplasm. The catalysed reaction is L-serine + acetyl-CoA = O-acetyl-L-serine + CoA. Its pathway is amino-acid biosynthesis; L-cysteine biosynthesis; L-cysteine from L-serine: step 1/2. Its activity is regulated as follows. Sensitive to feedback inhibition by L-cysteine. This Salmonella typhimurium (strain LT2 / SGSC1412 / ATCC 700720) protein is Serine acetyltransferase (cysE).